A 203-amino-acid chain; its full sequence is Ribonuclease HII (203 aa).

The RNase H type-2 domain maps to 15–201; the sequence is LLVAGLDEAG…VAQAPLRFPE (187 aa). The a divalent metal cation site is built by D21, E22, and D111.

This sequence belongs to the RNase HII family. Requires Mn(2+) as cofactor. Mg(2+) is required as a cofactor.

It localises to the cytoplasm. It carries out the reaction Endonucleolytic cleavage to 5'-phosphomonoester.. Functionally, endonuclease that specifically degrades the RNA of RNA-DNA hybrids. The protein is Ribonuclease HII of Thermus thermophilus (strain ATCC BAA-163 / DSM 7039 / HB27).